A 113-amino-acid polypeptide reads, in one-letter code: MRKSYRVKKEAEFQTVFTQGQSCANRQFVVYMLEKPDQKHFRVGISVGKKIGNAVARNWVKRRIRQSLTELKPQLKQDCDFLVIARPTVAYMSMAEVKEHLKHVLKLAKVLGE.

Belongs to the RnpA family. In terms of assembly, consists of a catalytic RNA component (M1 or rnpB) and a protein subunit.

The enzyme catalyses Endonucleolytic cleavage of RNA, removing 5'-extranucleotides from tRNA precursor.. Functionally, RNaseP catalyzes the removal of the 5'-leader sequence from pre-tRNA to produce the mature 5'-terminus. It can also cleave other RNA substrates such as 4.5S RNA. The protein component plays an auxiliary but essential role in vivo by binding to the 5'-leader sequence and broadening the substrate specificity of the ribozyme. The sequence is that of Ribonuclease P protein component from Ligilactobacillus salivarius (strain UCC118) (Lactobacillus salivarius).